Reading from the N-terminus, the 170-residue chain is NADH-dependent flavin reductase StyB (170 aa).

Belongs to the non-flavoprotein flavin reductase family. As to quaternary structure, homodimer.

It catalyses the reaction a reduced flavin + NAD(+) = an oxidized flavin + NADH + 2 H(+). It functions in the pathway aromatic compound metabolism. Reductase component of a two-component system that catalyzes the first step in the aerobic styrene degradation pathway by enantioselective epoxidation of the vinyl side chain. Utilizes NADH to reduce FAD, which is then transferred to the styrene monooxygenase StyA. This is NADH-dependent flavin reductase StyB (styB) from Pseudomonas fluorescens.